The following is a 1310-amino-acid chain: MDTPPMQRSTPQRAGSPDTLELMDLLDAAAAAAEHRARVVTSSQPDDLLFGENGVMVGREHEIVSIPSVSGLQPEPRTEDVGEELTQDDYVCEDGQDLMGSPVIPLAEVFHTRFSEAGAREPTGADRSLETVSLGTKLARSPKPPMNDGETGRGTTPPFPQAFSPVSPASPVGDAAGNDQREDQRSIPRQTTRGNSPGLPSVVHRDRQTQSISGKKPGDEQAGHAHASGDGVVLQKTQRPAQGKSPKKKTLKVKVPLPARKPGGPVPGPVEQLYHVLSDSVPAKGAKADLPFETDDTRPRKHDARGITPRVPGRSSGGKPRAFLALPGRSHAPDPIEDDSPVEKKPKSREFVSSSSSSSSWGSSSEDEDDEPRRVSVGSETTGSRSGREHAPSPSNSDDSDSNDGGSTKQNIQPGYRSISGPDPRIRKTKRLAGEPGRQRQKSFSLPRSRTPIIPPVSGPLMMPDGSPWPGSAPLPSNRVRFGPSGETREGHWEDEAVRAARARYEASTEPVPLYVPELGDPARQYRALINLIYCPDRDPIAWLQNPKLTGVNSALNQFYQKLLPPGRAGTAVTGSVASPVPHVGEAMATGEALWALPHAAAAVAMSRRYDRAQKHFILQSLRRAFASMAYPEATGSSPAARISRGHPSPTTPATQTPDPQPSAAARSLSVCPPDDRLRTPRKRKSQPVESRSLLDKIRETPVADARVADDHVVSKAKRRVSEPVTITSGPVVDPPAVITMPLDGPAPNGGFRRIPRGALHTPVPSDQARKAYCTPETIARLVDDPLFPTAWRPALSFDPGALAEIAARRPGGGDRRFGPPSGVEALRRRCAWMRQIPDPEDVRLLIIYDPLPGEDINGPLESTLATDPGPSWSPSRGGLSVVLAALSNRLCLPSTHAWAGNWTGPPDVSALNARGVLLLSTRDLAFAGAVEYLGSRLASARRRLLVLDAVALERWPRDGPALSQYHVYVRAPARPDAQAVVRWPDSAVTEGLARAVFASSRTFGPASFARIETAFANLYPGEQPLCLCRGGNVAYTVCTRAGPKTRVPLSPREYRQYVLPGFDGCKDLARQSRGLGLGAADFVDEAAHSHRAANRWGLGAALRPVFLPEGRRPGAAGPEAGDVPTWARVFCRHALLEPDPAAEPLVLPPVAGRSVALYASADEARNALPPIPRVMWPPGFGAAETVLEGSDGTRFVFGHHGGSERPAETQAGRQRRTADDREHALEPDDWEVGCEDAWDSEEGGGDDGDAPGSSFGVSIVSVAPGVLRDRRVGLRPAVKVELLSSSSSSEDEDDVWGGRGGRSPPQSRG.

Disordered stretches follow at residues alanine 117–glutamate 271, glycine 285–isoleucine 454, and glycine 636–aspartate 696. Residues proline 341–glutamate 350 show a composition bias toward basic and acidic residues. 3 stretches are compositionally biased toward low complexity: residues phenylalanine 351–serine 364, proline 392–serine 407, and proline 648–alanine 666. The Nuclear localization signal signature appears at arginine 677–lysine 685. Phosphoserine; by VZV ORF66 is present on residues serine 686 and serine 722. Disordered stretches follow at residues arginine 1195 to valine 1258 and glutamate 1282 to glycine 1310. The span at arginine 1217–glutamate 1227 shows a compositional bias: basic and acidic residues. The segment covering proline 1228 to aspartate 1250 has biased composition (acidic residues).

It belongs to the herpesviridae ICP4 family. Interacts with IE4 and IE63. Interacts with human USF1 and SP1. In terms of processing, phosphorylated by ORF66 protein kinase on Ser-686 and Ser-722. Also phosphorylated by ORF47 protein kinase and by human CSNK2A1/CKII.

The protein localises to the host nucleus. Its subcellular location is the host cytoplasm. The protein resides in the virion tegument. In terms of biological role, transcriptional transactivator. May interact with and recruit specific components of the general transcription machinery to viral promoters and stabilize their formation for transcription initiation. Negatively regulates its own transcription. This immediate early (EI) protein may be necessary in virion for viral pathogenesis. The sequence is that of Major viral transcription factor ICP4 homolog from Homo sapiens (Human).